A 757-amino-acid polypeptide reads, in one-letter code: Protein Lines homolog 1 (757 aa).

A Phosphoserine modification is found at Ser635.

The protein belongs to the protein lines family. In terms of tissue distribution, expressed in adult testis, prostate, prostate, spleen, thymus, skeletal muscle, fetal kidney and brain.

In Homo sapiens (Human), this protein is Protein Lines homolog 1.